The following is a 509-amino-acid chain: tRNA (guanine(37)-N(1))-methyltransferase (509 aa).

The N-terminal 57 residues, 1–57, are a transit peptide targeting the mitochondrion; it reads MVLWILWRPFGFSRRLLKLERHSITESKSLIPLAWTSLTQTLSESPGIFLLGQRKRF. S-adenosyl-L-methionine is bound by residues H289, 327–328, 355–356, and N387; these read DL and DG. The tract at residues 478-509 is disordered; sequence TKNPENHEDPPLKRQRTAEAFSDEKTQIASNT.

Belongs to the class I-like SAM-binding methyltransferase superfamily. TRM5/TYW2 family. As to quaternary structure, monomer.

Its subcellular location is the mitochondrion matrix. The protein localises to the nucleus. The protein resides in the cytoplasm. It catalyses the reaction guanosine(37) in tRNA + S-adenosyl-L-methionine = N(1)-methylguanosine(37) in tRNA + S-adenosyl-L-homocysteine + H(+). In terms of biological role, involved in mitochondrial tRNA methylation. Specifically methylates the N1 position of guanosine-37 in various tRNAs. Methylation is not dependent on the nature of the nucleoside 5' of the target nucleoside. This is the first step in the biosynthesis of wybutosine (yW), a modified base adjacent to the anticodon of tRNAs and required for accurate decoding. The polypeptide is tRNA (guanine(37)-N(1))-methyltransferase (Macaca mulatta (Rhesus macaque)).